The following is a 129-amino-acid chain: Small ribosomal subunit protein uS11 (129 aa).

It belongs to the universal ribosomal protein uS11 family. In terms of assembly, part of the 30S ribosomal subunit. Interacts with proteins S7 and S18. Binds to IF-3.

Located on the platform of the 30S subunit, it bridges several disparate RNA helices of the 16S rRNA. Forms part of the Shine-Dalgarno cleft in the 70S ribosome. The protein is Small ribosomal subunit protein uS11 of Maricaulis maris (strain MCS10) (Caulobacter maris).